A 1546-amino-acid chain; its full sequence is Mediator of RNA polymerase II transcription subunit 14 (1546 aa).

2 consecutive short sequence motifs (LXXLL motif) follow at residues Leu-51 to Leu-55 and Leu-468 to Leu-472. Disordered stretches follow at residues Lys-692–Ser-717, Gly-1000–Trp-1193, and Asn-1512–Gln-1546. Composition is skewed to low complexity over residues Ser-693–Ser-717, Gly-1020–Pro-1035, and Pro-1061–Ser-1075. Residues Pro-1093–Ser-1102 show a composition bias toward pro residues. A compositionally biased stretch (polar residues) spans Gly-1125–Trp-1149. Positions Pro-1153–Gly-1163 are enriched in pro residues. The segment covering Met-1515–Gln-1527 has biased composition (low complexity).

This sequence belongs to the Mediator complex subunit 14 family. In terms of assembly, component of the Mediator complex.

Its subcellular location is the nucleus. Functionally, component of the Mediator complex, a coactivator involved in the regulated transcription of nearly all RNA polymerase II-dependent genes. Mediator functions as a bridge to convey information from gene-specific regulatory proteins to the basal RNA polymerase II transcription machinery. Mediator is recruited to promoters by direct interactions with regulatory proteins and serves as a scaffold for the assembly of a functional preinitiation complex with RNA polymerase II and the general transcription factors. This chain is Mediator of RNA polymerase II transcription subunit 14 (MED14), found in Drosophila pseudoobscura pseudoobscura (Fruit fly).